The primary structure comprises 202 residues: Probable nicotinate-nucleotide adenylyltransferase (202 aa).

This sequence belongs to the NadD family.

It catalyses the reaction nicotinate beta-D-ribonucleotide + ATP + H(+) = deamido-NAD(+) + diphosphate. It participates in cofactor biosynthesis; NAD(+) biosynthesis; deamido-NAD(+) from nicotinate D-ribonucleotide: step 1/1. Functionally, catalyzes the reversible adenylation of nicotinate mononucleotide (NaMN) to nicotinic acid adenine dinucleotide (NaAD). The polypeptide is Probable nicotinate-nucleotide adenylyltransferase (Clostridium perfringens (strain 13 / Type A)).